The primary structure comprises 147 residues: Large ribosomal subunit protein mL40 (147 aa).

The N-terminal 26 residues, 1 to 26, are a transit peptide targeting the mitochondrion; the sequence is MLAQTFKKPHRAVLEQVSGTTVFIRN.

It belongs to the mitochondrion-specific ribosomal protein mL40 family. Component of the mitochondrial large ribosomal subunit (mt-LSU). Mature yeast 74S mitochondrial ribosomes consist of a small (37S) and a large (54S) subunit. The 37S small subunit contains a 15S ribosomal RNA (15S mt-rRNA) and 34 different proteins. The 54S large subunit contains a 21S rRNA (21S mt-rRNA) and 46 different proteins.

The protein localises to the mitochondrion. Functionally, component of the mitochondrial ribosome (mitoribosome), a dedicated translation machinery responsible for the synthesis of mitochondrial genome-encoded proteins, including at least some of the essential transmembrane subunits of the mitochondrial respiratory chain. The mitoribosomes are attached to the mitochondrial inner membrane and translation products are cotranslationally integrated into the membrane. The sequence is that of Large ribosomal subunit protein mL40 (MRPL28) from Saccharomyces cerevisiae (strain ATCC 204508 / S288c) (Baker's yeast).